The following is a 1261-amino-acid chain: Apoptotic protease-activating factor 1 (1261 aa).

Residues 1-90 enclose the CARD domain; the sequence is MEERARSRLL…GDLASLLHSD (90 aa). In terms of domain architecture, NB-ARC spans 106-417; that stretch reads VSPSVQAILS…LELEEVEDVL (312 aa). 154–161 provides a ligand contact to ATP; the sequence is GMAGSGKS. WD repeat units follow at residues 615-654, 657-696, 700-743, 746-785, 798-836, 840-879, 882-921, 964-1003, 1006-1045, 1047-1088, 1091-1130, 1133-1172, and 1184-1223; these read PHQGAVYYACFSKDGSKIASCGASKALRVFKSTSGEKLLE, AHEEDVLCCAFSPDDRHIATCASDRKVKLWNVERGVLIRE, EHEE…SQNT, GHMEPVNHCCFSPNDLYLATSSSDGSLKLFEVSSANEWKS, EIKAMVKCSTWSADGSQIICAARNTVFVFDVETSDLLLK, SRLSTIQFCHACPNSSLLAVALSHYTVELWNFESSKKKAE, GHLSWVHCVQFSPDGSLLLSSSDDQTIRLWETDRVHTSSA, ELSSRIRCSCISRNAAFVALGSEDGTVQVIEVPSSKASVK, GHTKTVHHCQFTDDCEILITSSEDSTIRVWKWRTGECMVL, GHME…MLQD, CHEGAVLSCDVSSDGRLFATTSANRTAKVWSSASWKMLFL, GHKDCVRSCRFSWDNKRLATGDDNGEIRLWSMLDGALLKI, and YHAGWVTDLHFSPDNRVLVSTAGYIKWWSVESGEALQTFY.

As to quaternary structure, monomer. Oligomerizes upon binding of cytochrome c and dATP.

It localises to the cytoplasm. Oligomeric Apaf-1 mediates the cytochrome c-dependent autocatalytic activation of pro-caspase-9 (Apaf-3), leading to the activation of caspase-3 and apoptosis. This activation requires ATP. The protein is Apoptotic protease-activating factor 1 (apaf1) of Danio rerio (Zebrafish).